Consider the following 529-residue polypeptide: Autoinducer-2 kinase (529 aa).

The protein belongs to the FGGY kinase family.

It is found in the cytoplasm. It carries out the reaction (S)-4,5-dihydroxypentane-2,3-dione + ATP = (2S)-2-hydroxy-3,4-dioxopentyl phosphate + ADP + H(+). Its function is as follows. Catalyzes the phosphorylation of autoinducer-2 (AI-2) to phospho-AI-2, which subsequently inactivates the transcriptional regulator LsrR and leads to the transcription of the lsr operon. Phosphorylates the ring-open form of (S)-4,5-dihydroxypentane-2,3-dione (DPD), which is the precursor to all AI-2 signaling molecules, at the C5 position. The chain is Autoinducer-2 kinase from Yersinia enterocolitica serotype O:8 / biotype 1B (strain NCTC 13174 / 8081).